The chain runs to 343 residues: MKIKALSKLKPEEGIWLTEVEKPEMGHNDLLIRIKKTAICGTDVHIYNWDEWSQKTIPVPMVVGHEYVGEVVGIGQEVRGFEIGDRVSGEGHITCGHCRNCRGGRTHLCRNTTGVGVNRTGAFSEYLVIPAFNAFKIPAGISDDLASIFDPFGNAVHTALSFDLVGEDVLITGAGPIGIMAAAVAKHVGARHVVITDVNEYRLDLAKKMGVTRAVNVMNEKLEDVMSELGMTEGFDVGLEMSGNPSAFNSMLTNMNHGGKISLLGIPPSDMTVDWNQVIFKGLVIKGIYGREMFETWYKMASLIQSGLDLTPIITHHYKIDDFQAGFDMMRSGMSGKVILDWE.

C40 is a Zn(2+) binding site. Residues T42 and H45 each act as charge relay system in the active site. H65, E66, C95, C98, C101, and C109 together coordinate Zn(2+). Residues I177, D197, R202, 264 to 266, and 288 to 289 each bind NAD(+); these read LGI and IY.

This sequence belongs to the zinc-containing alcohol dehydrogenase family. In terms of assembly, homotetramer. It depends on Zn(2+) as a cofactor.

The protein localises to the cytoplasm. The catalysed reaction is L-threonine + NAD(+) = (2S)-2-amino-3-oxobutanoate + NADH + H(+). It participates in amino-acid degradation; L-threonine degradation via oxydo-reductase pathway; glycine from L-threonine: step 1/2. In terms of biological role, catalyzes the NAD(+)-dependent oxidation of L-threonine to 2-amino-3-ketobutyrate. The chain is L-threonine 3-dehydrogenase from Aliivibrio fischeri (strain ATCC 700601 / ES114) (Vibrio fischeri).